A 427-amino-acid chain; its full sequence is Trigger factor (427 aa).

The 86-residue stretch at 163–248 (GDTVVIDFVG…IHEVKTKEVP (86 aa)) folds into the PPIase FKBP-type domain.

This sequence belongs to the FKBP-type PPIase family. Tig subfamily.

The protein resides in the cytoplasm. The catalysed reaction is [protein]-peptidylproline (omega=180) = [protein]-peptidylproline (omega=0). In terms of biological role, involved in protein export. Acts as a chaperone by maintaining the newly synthesized protein in an open conformation. Functions as a peptidyl-prolyl cis-trans isomerase. This Streptococcus agalactiae serotype Ia (strain ATCC 27591 / A909 / CDC SS700) protein is Trigger factor.